A 364-amino-acid chain; its full sequence is Putative F-box/kelch-repeat protein At1g12170 (364 aa).

Residues 1–50 enclose the F-box domain; that stretch reads MMHVILPWELVEEILYRVPPLSLTRFKIVCKQWNTLFKSKSFVNNHLVRV. Kelch repeat units follow at residues 156-205 and 328-364; these read SIYN…LNGN and CVYIVRGNALTKIQIVGVDAKNYINHCSYVPSLIPVP.

The polypeptide is Putative F-box/kelch-repeat protein At1g12170 (Arabidopsis thaliana (Mouse-ear cress)).